The chain runs to 92 residues: DNA-directed RNA polymerase subunit omega (92 aa).

This sequence belongs to the RNA polymerase subunit omega family. In terms of assembly, the RNAP catalytic core consists of 2 alpha, 1 beta, 1 beta' and 1 omega subunit. When a sigma factor is associated with the core the holoenzyme is formed, which can initiate transcription.

The catalysed reaction is RNA(n) + a ribonucleoside 5'-triphosphate = RNA(n+1) + diphosphate. Its function is as follows. Promotes RNA polymerase assembly. Latches the N- and C-terminal regions of the beta' subunit thereby facilitating its interaction with the beta and alpha subunits. The protein is DNA-directed RNA polymerase subunit omega of Acinetobacter baumannii (strain AB307-0294).